A 255-amino-acid chain; its full sequence is Large ribosomal subunit protein uL6m (255 aa).

A disordered region spans residues 39 to 61; sequence AARRNFSATTTRPSKLGRTPLSI.

Belongs to the universal ribosomal protein uL6 family. Component of the mitochondrial large ribosomal subunit (mt-LSU). Mature N.crassa 74S mitochondrial ribosomes consist of a small (37S) and a large (54S) subunit. The 37S small subunit contains a 16S ribosomal RNA (16S mt-rRNA) and 32 different proteins. The 54S large subunit contains a 23S rRNA (23S mt-rRNA) and 42 different proteins.

It is found in the mitochondrion. In terms of biological role, component of the mitochondrial ribosome (mitoribosome), a dedicated translation machinery responsible for the synthesis of mitochondrial genome-encoded proteins, including at least some of the essential transmembrane subunits of the mitochondrial respiratory chain. The mitoribosomes are attached to the mitochondrial inner membrane and translation products are cotranslationally integrated into the membrane. This Neurospora crassa (strain ATCC 24698 / 74-OR23-1A / CBS 708.71 / DSM 1257 / FGSC 987) protein is Large ribosomal subunit protein uL6m (mrpl6).